A 62-amino-acid chain; its full sequence is Large ribosomal subunit protein bL33 (62 aa).

Belongs to the bacterial ribosomal protein bL33 family.

The polypeptide is Large ribosomal subunit protein bL33 (Porphyromonas gingivalis (strain ATCC 33277 / DSM 20709 / CIP 103683 / JCM 12257 / NCTC 11834 / 2561)).